We begin with the raw amino-acid sequence, 2195 residues long: COPII coat assembly protein SEC16 (2195 aa).

Basic residues predominate over residues 1-20 (MTPEAKKRKNQKKKLKQKQK). The disordered stretch occupies residues 1–112 (MTPEAKKRKN…ADSNDLPDNS (112 aa)). Composition is skewed to basic and acidic residues over residues 21–32 (KAAEKAASHSEE) and 49–59 (SVNRTESDIAS). Ser28 carries the post-translational modification Phosphoserine. The span at 66–79 (VSSSTNISPANETQ) shows a compositional bias: polar residues. Ser73 is subject to Phosphoserine. Basic and acidic residues predominate over residues 86–102 (QELHHKLLNDSDQHDIT). Ser144 is subject to Phosphoserine. Disordered regions lie at residues 201-233 (PSDGNLLSPELSSGDTPTHNVPLGTKDNEINDD), 247-381 (NVLP…FHGH), 436-555 (TQSS…KASR), 594-616 (GTPNQQVSVPNIVSPKPPVVKDN), and 643-708 (SKKG…QSPV). Over residues 210-219 (ELSSGDTPTH) the composition is skewed to polar residues. Basic and acidic residues predominate over residues 257-276 (EDERLKLETHVSTEEKKQDI). Polar residues predominate over residues 282-292 (AENLFTSSTEP). Ser313 carries the phosphoserine modification. Basic and acidic residues predominate over residues 314–329 (DQKVPWEEDVKKDFHN). Residues 330-341 (ENTNNTQESAPN) are compositionally biased toward polar residues. Composition is skewed to basic and acidic residues over residues 342–381 (TDDRDKGYEGNEALKKSESCTAADERSYSEETSEDIFHGH) and 450–479 (STDKNADVTSKSQEKHEDLFAASGNDEKLP). Residues Ser472 and Ser483 each carry the phosphoserine modification. The span at 489–501 (SGKTENSMQTSTE) shows a compositional bias: polar residues. Acidic residues predominate over residues 512-533 (ENDDDLLDDDDSFLASSEEEDT). 2 stretches are compositionally biased toward polar residues: residues 534–545 (VPNTDNTTNLTS) and 594–604 (GTPNQQVSVPN). Thr595 carries the post-translational modification Phosphothreonine. 22 positions are modified to phosphoserine: Ser607, Ser660, Ser663, Ser665, Ser674, Ser678, Ser681, Ser701, Ser704, Ser706, Ser759, Ser762, Ser765, Ser768, Ser843, Ser1511, Ser1515, Ser1578, Ser1602, Ser1603, Ser1611, and Ser1617. Positions 657 to 666 (RFGSGNSFSS) are enriched in polar residues. Over residues 693–708 (EPRSSRTNSAISQSPV) the composition is skewed to polar residues. Disordered stretches follow at residues 1656–1731 (VHET…TVNP) and 1751–1804 (GTDA…QDEN). The segment covering 1673-1682 (MPEDESHTSH) has biased composition (basic and acidic residues). Composition is skewed to polar residues over residues 1683–1693 (DNSNADQNTLK) and 1775–1786 (ENISKSASSAYL). 2 positions are modified to phosphoserine: Ser1778 and Ser1875. Residues 1917–1936 (SFELSESTSQAQSNGNVASE) are disordered. Residues Ser1973, Ser1986, and Ser1992 each carry the phosphoserine modification. The disordered stretch occupies residues 1976–2031 (DKYNDVIEDESDDDNMSTDEAKNRKEEKKNVNMKKETKPSNKDIDDKSNGWFGWLK). Residues 1981–1992 (VIEDESDDDNMS) show a composition bias toward acidic residues. Residues 1994–2023 (DEAKNRKEEKKNVNMKKETKPSNKDIDDKS) are compositionally biased toward basic and acidic residues. At Thr2049 the chain carries Phosphothreonine. A compositionally biased stretch (basic and acidic residues) spans 2054 to 2072 (EKLKRWVNKDATEEEKQKI). The segment at 2054–2195 (EKLKRWVNKD…GYVNVMDNIQ (142 aa)) is disordered. Ser2130 is modified (phosphoserine). The span at 2131-2143 (PTGPNPNNSPSPS) shows a compositional bias: pro residues.

The protein belongs to the SEC16 family. In terms of assembly, interacts with SEC23, SEC31 and SED4.

The protein localises to the endoplasmic reticulum membrane. In terms of biological role, involved in the initiation of assembly of the COPII coat required for the formation of transport vesicles from the endoplasmic reticulum (ER) and the selection of cargo molecules. Also involved in autophagy. The chain is COPII coat assembly protein SEC16 (SEC16) from Saccharomyces cerevisiae (strain ATCC 204508 / S288c) (Baker's yeast).